We begin with the raw amino-acid sequence, 496 residues long: Probable malate:quinone oxidoreductase (496 aa).

The protein belongs to the MQO family. It depends on FAD as a cofactor.

The enzyme catalyses (S)-malate + a quinone = a quinol + oxaloacetate. It participates in carbohydrate metabolism; tricarboxylic acid cycle; oxaloacetate from (S)-malate (quinone route): step 1/1. The polypeptide is Probable malate:quinone oxidoreductase (Prochlorococcus marinus (strain MIT 9303)).